Reading from the N-terminus, the 433-residue chain is Protein translocase subunit SecY (433 aa).

Helical transmembrane passes span 17-37, 71-91, 117-137, 141-161, 184-204, 212-232, 268-288, 310-330, 366-386, and 388-408; these read IIFT…PIPG, IFAL…LMSV, LTVL…ESMV, GPVV…TLVV, LIIF…MFEL, PLIA…IIFF, GVIP…LANF, YILL…AIVF, LTVI…LLMN, and YVIS…VVLD.

This sequence belongs to the SecY/SEC61-alpha family. As to quaternary structure, component of the Sec protein translocase complex. Heterotrimer consisting of SecY, SecE and SecG subunits. The heterotrimers can form oligomers, although 1 heterotrimer is thought to be able to translocate proteins. Interacts with the ribosome. Interacts with SecDF, and other proteins may be involved. Interacts with SecA.

It is found in the cell inner membrane. In terms of biological role, the central subunit of the protein translocation channel SecYEG. Consists of two halves formed by TMs 1-5 and 6-10. These two domains form a lateral gate at the front which open onto the bilayer between TMs 2 and 7, and are clamped together by SecE at the back. The channel is closed by both a pore ring composed of hydrophobic SecY resides and a short helix (helix 2A) on the extracellular side of the membrane which forms a plug. The plug probably moves laterally to allow the channel to open. The ring and the pore may move independently. This chain is Protein translocase subunit SecY, found in Rickettsia typhi (strain ATCC VR-144 / Wilmington).